We begin with the raw amino-acid sequence, 157 residues long: Putative pre-16S rRNA nuclease (157 aa).

It belongs to the YqgF nuclease family.

Its subcellular location is the cytoplasm. Its function is as follows. Could be a nuclease involved in processing of the 5'-end of pre-16S rRNA. The polypeptide is Putative pre-16S rRNA nuclease (Ruegeria sp. (strain TM1040) (Silicibacter sp.)).